An 878-amino-acid chain; its full sequence is Phosphoenolpyruvate carboxylase (878 aa).

Residues His140 and Lys545 contribute to the active site.

It belongs to the PEPCase type 1 family. The cofactor is Mg(2+).

The enzyme catalyses oxaloacetate + phosphate = phosphoenolpyruvate + hydrogencarbonate. Functionally, forms oxaloacetate, a four-carbon dicarboxylic acid source for the tricarboxylic acid cycle. This is Phosphoenolpyruvate carboxylase from Ectopseudomonas mendocina (strain ymp) (Pseudomonas mendocina).